A 309-amino-acid chain; its full sequence is MAFLSKFGNILKQTTNKQLNAQVSLSSPSLFQAIRCMSSSKLFIGGMAYSMDEDSLREAFTKYGEVVDTRVILDRETGRSRGFGFVTFTSSEAASSAIQALDGRDLHGRVVKVNYANDRTSGGGFGGGGYGGGGGGYGGSGGYGGGAGGYGGSGGYGGGAGGYGGNSGGGYGGNAAGGYGGSGAGGYGGDATGHGGAGGGYGSSGGFGSSGNTYGEGSSASAGAVGDYNGSSGYGSANTYGSSNGGFAGDSQFGGSPVGNSSQFGGDNTQFTAGGQFGGEDQFGSMEKSETKMEDGPIGGEFEDVAKRA.

Residues 1–37 (MAFLSKFGNILKQTTNKQLNAQVSLSSPSLFQAIRCM) constitute a mitochondrion transit peptide. The 79-residue stretch at 40–118 (SKLFIGGMAY…RVVKVNYAND (79 aa)) folds into the RRM domain. The disordered stretch occupies residues 247–309 (FAGDSQFGGS…GEFEDVAKRA (63 aa)). Polar residues predominate over residues 258-273 (VGNSSQFGGDNTQFTA).

Belongs to the GR-RBP family. In terms of assembly, homodimer. Interacts with ORRM2 and MORF8/RIP1. Interacts with RBG5/ORRM4. Binds to RBG2/ORRM5.

It is found in the mitochondrion. Its function is as follows. Possibly has a role in RNA transcription or processing during stress. Involved in C-to-U editing of mitochondrial RNA. Functions as a minor mitochondrial editing factor. Controls 6 percent of the mitochondrial editing sites. This Arabidopsis thaliana (Mouse-ear cress) protein is Glycine-rich RNA-binding protein 3, mitochondrial.